A 427-amino-acid chain; its full sequence is 3-phosphoshikimate 1-carboxyvinyltransferase (427 aa).

3-phosphoshikimate is bound by residues Lys-20, Ser-21, and Arg-25. Lys-20 contributes to the phosphoenolpyruvate binding site. The phosphoenolpyruvate site is built by Gly-92 and Arg-120. Ser-166, Gln-168, Asp-312, and Lys-339 together coordinate 3-phosphoshikimate. Gln-168 is a phosphoenolpyruvate binding site. Catalysis depends on Asp-312, which acts as the Proton acceptor. Arg-343 and Arg-385 together coordinate phosphoenolpyruvate.

Belongs to the EPSP synthase family. Monomer.

The protein resides in the cytoplasm. It catalyses the reaction 3-phosphoshikimate + phosphoenolpyruvate = 5-O-(1-carboxyvinyl)-3-phosphoshikimate + phosphate. The protein operates within metabolic intermediate biosynthesis; chorismate biosynthesis; chorismate from D-erythrose 4-phosphate and phosphoenolpyruvate: step 6/7. Catalyzes the transfer of the enolpyruvyl moiety of phosphoenolpyruvate (PEP) to the 5-hydroxyl of shikimate-3-phosphate (S3P) to produce enolpyruvyl shikimate-3-phosphate and inorganic phosphate. In Streptococcus pyogenes serotype M4 (strain MGAS10750), this protein is 3-phosphoshikimate 1-carboxyvinyltransferase.